The chain runs to 340 residues: MSAPIIAIDAMGGDFGPRNIVQASLACLTATPSLHLVLVGQASLIEELIARHGAVDRSRLRVVNANEAIAMDERPSQALRGKPDSSMRVALELVASGQAQACVSAGNTGALMALSRFVLKTLPGIDRPAMIAAIPTRSGHCQMLDLGANVDCSAEALYQFAVMGSVLAETLGVKKPRVALLNVGTEDIKGNQQVKLAAGLLQAAQGLNYIGYIEGDGLYRGEADVVVCDGFVGNVLLKSSEGLASMIAARIDTLFNRNLLSRAVGALALPLLKRLQTDLAPARHNGASLLGLQGIVVKSHGSASVSGFQSAIQRAIVESRENLPQRLKGRLELLLQNGQT.

It belongs to the PlsX family. As to quaternary structure, homodimer. Probably interacts with PlsY.

Its subcellular location is the cytoplasm. It carries out the reaction a fatty acyl-[ACP] + phosphate = an acyl phosphate + holo-[ACP]. It participates in lipid metabolism; phospholipid metabolism. Its function is as follows. Catalyzes the reversible formation of acyl-phosphate (acyl-PO(4)) from acyl-[acyl-carrier-protein] (acyl-ACP). This enzyme utilizes acyl-ACP as fatty acyl donor, but not acyl-CoA. This is Phosphate acyltransferase from Pseudomonas savastanoi pv. phaseolicola (strain 1448A / Race 6) (Pseudomonas syringae pv. phaseolicola (strain 1448A / Race 6)).